The chain runs to 313 residues: Probable lysophospholipase L2 (313 aa).

The protein resides in the cell inner membrane. It carries out the reaction a 1-acyl-sn-glycero-3-phosphocholine + H2O = sn-glycerol 3-phosphocholine + a fatty acid + H(+). This chain is Probable lysophospholipase L2 (pldB), found in Haemophilus influenzae (strain ATCC 51907 / DSM 11121 / KW20 / Rd).